The sequence spans 306 residues: tRNA pseudouridine synthase B (306 aa).

Asp46 (nucleophile) is an active-site residue.

This sequence belongs to the pseudouridine synthase TruB family. Type 1 subfamily.

The enzyme catalyses uridine(55) in tRNA = pseudouridine(55) in tRNA. Its function is as follows. Responsible for synthesis of pseudouridine from uracil-55 in the psi GC loop of transfer RNAs. This Gluconacetobacter diazotrophicus (strain ATCC 49037 / DSM 5601 / CCUG 37298 / CIP 103539 / LMG 7603 / PAl5) protein is tRNA pseudouridine synthase B.